We begin with the raw amino-acid sequence, 417 residues long: Serine hydroxymethyltransferase (417 aa).

Residues Leu-122 and 126-128 contribute to the (6S)-5,6,7,8-tetrahydrofolate site; that span reads GHL. Position 230 is an N6-(pyridoxal phosphate)lysine (Lys-230). 355 to 357 contributes to the (6S)-5,6,7,8-tetrahydrofolate binding site; that stretch reads SPF.

It belongs to the SHMT family. In terms of assembly, homodimer. Requires pyridoxal 5'-phosphate as cofactor.

The protein resides in the cytoplasm. It carries out the reaction (6R)-5,10-methylene-5,6,7,8-tetrahydrofolate + glycine + H2O = (6S)-5,6,7,8-tetrahydrofolate + L-serine. It participates in one-carbon metabolism; tetrahydrofolate interconversion. It functions in the pathway amino-acid biosynthesis; glycine biosynthesis; glycine from L-serine: step 1/1. In terms of biological role, catalyzes the reversible interconversion of serine and glycine with tetrahydrofolate (THF) serving as the one-carbon carrier. This reaction serves as the major source of one-carbon groups required for the biosynthesis of purines, thymidylate, methionine, and other important biomolecules. Also exhibits THF-independent aldolase activity toward beta-hydroxyamino acids, producing glycine and aldehydes, via a retro-aldol mechanism. This Francisella tularensis subsp. tularensis (strain FSC 198) protein is Serine hydroxymethyltransferase.